We begin with the raw amino-acid sequence, 331 residues long: 6-phosphogluconolactonase (331 aa).

The protein belongs to the cycloisomerase 2 family.

It carries out the reaction 6-phospho-D-glucono-1,5-lactone + H2O = 6-phospho-D-gluconate + H(+). It functions in the pathway carbohydrate degradation; pentose phosphate pathway; D-ribulose 5-phosphate from D-glucose 6-phosphate (oxidative stage): step 2/3. Its function is as follows. Catalyzes the hydrolysis of 6-phosphogluconolactone to 6-phosphogluconate. This is 6-phosphogluconolactonase from Salmonella arizonae (strain ATCC BAA-731 / CDC346-86 / RSK2980).